Here is an 807-residue protein sequence, read N- to C-terminus: Spondin-1 (807 aa).

An N-terminal signal peptide occupies residues 1 to 28; that stretch reads MRLSPVSLRLSRGPALLALALPLAAALA. The Reelin domain maps to 29–194; the sequence is FSDETLDKVT…DPTLDGVTDR (166 aa). 17 disulfides stabilise this stretch: Cys-44-Cys-128, Cys-156-Cys-182, Cys-199-Cys-336, Cys-200-Cys-340, Cys-202-Cys-415, Cys-443-Cys-480, Cys-454-Cys-489, Cys-459-Cys-494, Cys-502-Cys-538, Cys-513-Cys-517, Cys-548-Cys-554, Cys-559-Cys-595, Cys-570-Cys-574, Cys-605-Cys-610, Cys-615-Cys-650, Cys-626-Cys-630, and Cys-660-Cys-665. One can recognise a Spondin domain in the interval 195–388; that stretch reads PILDCCACGT…LTSLDHPQSP (194 aa). Asn-214 is a glycosylation site (N-linked (GlcNAc...) asparagine). Ca(2+)-binding residues include Asp-325, Asp-354, and Asp-358. TSP type-1 domains lie at 442–495, 501–555, 558–611, 614–666, and 668–721; these read TCIY…PGCS, TCTM…EECS, SCLV…PECH, PCLL…PECP, and DCEL…RKCL. N-linked (GlcNAc...) asparagine glycosylation is present at Asn-681. The span at 732–746 shows a compositional bias: basic and acidic residues; sequence REARESRRSEQLREE. The tract at residues 732–752 is disordered; that stretch reads REARESRRSEQLREESDGEQF. The region spanning 754–806 is the TSP type-1 6 domain; the sequence is GCRMRPWTAWSECTKLCGGGIQERYMTVKKRFKSSQFTSCKDKKEIRACNVHP.

Binds to the central extracellular domain of APP and inhibits beta-secretase cleavage of APP.

The protein resides in the secreted. Its subcellular location is the extracellular space. It localises to the extracellular matrix. Functionally, cell adhesion protein that promotes the attachment of spinal cord and sensory neuron cells and the outgrowth of neurites in vitro. May contribute to the growth and guidance of axons in both the spinal cord and the PNS. This is Spondin-1 (Spon1) from Mus musculus (Mouse).